The chain runs to 181 residues: Probable calcium-binding protein CML16 (181 aa).

Residues methionine 1–alanine 24 form a disordered region. 4 consecutive EF-hand domains span residues proline 23–proline 58, alanine 63–aspartate 98, glutamate 100–glycine 135, and cysteine 136–alanine 171. Aspartate 36, aspartate 38, aspartate 40, arginine 42, glutamate 47, aspartate 76, aspartate 78, aspartate 80, glutamate 87, aspartate 113, aspartate 115, aspartate 117, arginine 119, glutamate 124, aspartate 149, aspartate 151, aspartate 153, cysteine 155, and glutamate 160 together coordinate Ca(2+).

Its function is as follows. Potential calcium sensor. The chain is Probable calcium-binding protein CML16 (CML16) from Oryza sativa subsp. japonica (Rice).